Consider the following 534-residue polypeptide: uncharacterized protein (534 aa).

Disordered regions lie at residues 1–93 (MSSS…DDTG), 123–260 (SPES…LSSA), 313–349 (AAAT…TFPS), and 383–505 (PWGA…QGCP). Residues 35–45 (GPGPDPGPEPG) show a composition bias toward pro residues. Residues Ser-87 and Ser-123 each carry the phosphoserine modification. The segment covering 145-161 (RGAAAQRCGEAARAEAG) has biased composition (low complexity). Residues 230 to 239 (SPKDPRDTPR) show a composition bias toward basic and acidic residues.

This is an uncharacterized protein from Bos taurus (Bovine).